The primary structure comprises 249 residues: 2,3-bisphosphoglycerate-dependent phosphoglycerate mutase (249 aa).

Substrate is bound by residues 11–18 (RHGESDWN), 24–25 (TG), arginine 63, 90–93 (ERHY), lysine 101, 117–118 (RR), and 184–185 (GN). Catalysis depends on histidine 12, which acts as the Tele-phosphohistidine intermediate. Residue glutamate 90 is the Proton donor/acceptor of the active site.

Belongs to the phosphoglycerate mutase family. BPG-dependent PGAM subfamily.

The enzyme catalyses (2R)-2-phosphoglycerate = (2R)-3-phosphoglycerate. The protein operates within carbohydrate degradation; glycolysis; pyruvate from D-glyceraldehyde 3-phosphate: step 3/5. In terms of biological role, catalyzes the interconversion of 2-phosphoglycerate and 3-phosphoglycerate. This chain is 2,3-bisphosphoglycerate-dependent phosphoglycerate mutase, found in Mycobacterium bovis (strain BCG / Pasteur 1173P2).